The chain runs to 514 residues: Carboxysome shell carbonic anhydrase (514 aa).

Residues 1 to 144 (MNTRNTRSKQ…LTAATEQFSR (144 aa)) form an N-terminal domain region. Residues 151 to 397 (DDSASAIGFF…GRYPPNDIGH (247 aa)) form a catalytic domain region. C173 is a Zn(2+) binding site. The active-site Proton acceptor is D175. Zn(2+) is bound by residues H242 and C253. The segment at 398–514 (AERYISVGDG…GSPIEEVASA (117 aa)) is C-terminal domain.

The protein belongs to the beta-class carbonic anhydrase family. CsoSCA subfamily. As to quaternary structure, homodimer, may form filaments. It depends on Zn(2+) as a cofactor.

Its subcellular location is the carboxysome. It catalyses the reaction hydrogencarbonate + H(+) = CO2 + H2O. Carbonic anhydrase activity is inhibited by ethoxyzolamide, dithiothreitol, cyanide, and divalent metal chelators dipicolinic acid and nitrilotriacetic acid. Reversible hydration of carbon dioxide. Essential for chemolithotrophic carbon dioxide fixation, supplies CO(2) to RuBisCO (ribulose bisphosphate carboxylase, cbbL-cbbS) in the carboxysome. There are estimated to be 40 CsoSCA dimers per carboxysome. Functionally, unlike beta-carboxysomes, alpha-carboxysomes (Cb) can form without cargo protein. CsoS2 is essential for Cb formation and is also capable of targeting foreign proteins to the Cb. The Cb shell assembles with the aid of CsoS2; CsoS1A, CsoS1B and CsoS1C form the majority of the shell while CsoS4A and CsoS4B form vertices. CsoS1D forms pseudohexamers that probably control metabolite flux into and out of the shell. This chain is Carboxysome shell carbonic anhydrase, found in Halothiobacillus neapolitanus (strain ATCC 23641 / c2) (Thiobacillus neapolitanus).